The following is a 93-amino-acid chain: OMEGA-ectatommitoxin(02)-Rm1c (93 aa).

The N-terminal stretch at 1–30 (MKDSYISIVIAYLMVTFILVSSMPIEGEKG) is a signal peptide. Intrachain disulfides connect Cys39/Cys52, Cys47/Cys68, and Cys70/Cys79. The region spanning 43–80 (YENYCFNGKCVHVVAQDEPGKPCYSCICDEFYIGERCG) is the EGF-like domain.

Belongs to the EGF domain peptide family. In terms of tissue distribution, expressed by the venom gland.

The protein localises to the secreted. Ant peptide with probable defensive activity which acts as a potent agonist of the mammalian epidermal growth factor receptor (EGFR). Mimics, both structurally and functionally, vertebrate epidermal growth factor (EGF) peptide hormones. In vivo, intraplantar injection in mice causes long-lasting (several days) hypersensitivity of the injected paw to both mechanical and thermal stimuli. Its long-lasting effect is unusual for venom toxins whose effects are usually immediate. One possible explanation is that it would reduce the duration of a nest attack, discourage future attacks, or enhance the actions of subsequent exposure to other pain-inducing venom peptides. This Rhytidoponera metallica (Australian green-headed ant) protein is OMEGA-ectatommitoxin(02)-Rm1c.